An 85-amino-acid chain; its full sequence is Toxin Cll7 (85 aa).

Positions 1–19 (MNSLLMITACLVLFGTVWA) are cleaved as a signal peptide. The 64-residue stretch at 20 to 83 (KEGYLVNTYT…TWPLPNKTCG (64 aa)) folds into the LCN-type CS-alpha/beta domain. Disulfide bonds link Cys-31/Cys-82, Cys-35/Cys-58, Cys-44/Cys-63, and Cys-48/Cys-65.

The protein belongs to the long (4 C-C) scorpion toxin superfamily. Sodium channel inhibitor family. Beta subfamily. In terms of tissue distribution, expressed by the venom gland.

It localises to the secreted. Its function is as follows. Beta toxins bind voltage-independently at site-4 of sodium channels (Nav) and shift the voltage of activation toward more negative potentials thereby affecting sodium channel activation and promoting spontaneous and repetitive firing. The sequence is that of Toxin Cll7 from Centruroides limpidus (Mexican scorpion).